Reading from the N-terminus, the 763-residue chain is Serine/threonine-protein kinase PknG (763 aa).

The tract at residues M1–Q32 is disordered. The Protein kinase domain occupies Y160–M406. ATP contacts are provided by residues I166–V174 and K190. D289 serves as the catalytic Proton acceptor.

It belongs to the protein kinase superfamily. Ser/Thr protein kinase family. In terms of processing, autophosphorylated.

The catalysed reaction is L-seryl-[protein] + ATP = O-phospho-L-seryl-[protein] + ADP + H(+). The enzyme catalyses L-threonyl-[protein] + ATP = O-phospho-L-threonyl-[protein] + ADP + H(+). This is Serine/threonine-protein kinase PknG (pknG) from Mycobacterium leprae (strain TN).